Here is a 46-residue protein sequence, read N- to C-terminus: Protein PsbN (46 aa).

A helical transmembrane segment spans residues 7 to 27; it reads ALSVAIGVLAVLLGMTGFGVY.

The protein belongs to the PsbN family.

It localises to the cellular thylakoid membrane. May play a role in photosystem I and II biogenesis. This chain is Protein PsbN, found in Parasynechococcus marenigrum (strain WH8102).